A 395-amino-acid polypeptide reads, in one-letter code: Calcium sensing receptor, chloroplastic (395 aa).

The segment covering 1 to 12 (MAPVPVSVSATL) has biased composition (low complexity). Positions 1-27 (MAPVPVSVSATLAPPPAAPPKTTSRSW) are disordered. A chloroplast-targeting transit peptide spans 1-39 (MAPVPVSVSATLAPPPAAPPKTTSRSWERRAPADAAFAA). Residues 40–182 (ASSVAGSAAL…TITSLGPEDY (143 aa)) lie on the Lumenal, thylakoid side of the membrane. The helical transmembrane segment at 183–203 (VVAAGXAFLAYLLVPPVWSLV) threads the bilayer. The Stromal segment spans residues 204 to 395 (SSSLRGYKGD…TRKLLPGGVD (192 aa)). One can recognise a Rhodanese domain in the interval 224-345 (TTQGYVLIDV…WAQSRLGTDS (122 aa)). A Phosphothreonine modification is found at Thr-377.

Phosphorylated in both bundle sheath and mesophyll cells, under both low and high light regimes (70 vs 900 umol photons/m-2/s).

It localises to the plastid. Its subcellular location is the chloroplast thylakoid membrane. Functionally, modulates cytoplasmic Ca(2+) concentration and is crucial for proper stomatal regulation in response to elevated levels of external Ca(2+). May function by regulating concentrations of inositol 1,4,5-trisphosphate (IP3), which in turn triggers release of Ca(2+) from internal stores. May play a role in de-etiolation. The polypeptide is Calcium sensing receptor, chloroplastic (Zea mays (Maize)).